Here is a 194-residue protein sequence, read N- to C-terminus: Ribonuclease HII (194 aa).

Positions 16–194 (CIVAGIDEAG…PYHRRSFRCC (179 aa)) constitute an RNase H type-2 domain. Residues Asp22, Glu23, and Asp113 each coordinate a divalent metal cation.

This sequence belongs to the RNase HII family. The cofactor is Mn(2+). Mg(2+) is required as a cofactor.

It localises to the cytoplasm. The enzyme catalyses Endonucleolytic cleavage to 5'-phosphomonoester.. Its function is as follows. Endonuclease that specifically degrades the RNA of RNA-DNA hybrids. The protein is Ribonuclease HII of Rickettsia massiliae (strain Mtu5).